Here is a 157-residue protein sequence, read N- to C-terminus: Endoribonuclease YbeY (157 aa).

3 residues coordinate Zn(2+): histidine 123, histidine 127, and histidine 133.

This sequence belongs to the endoribonuclease YbeY family. Requires Zn(2+) as cofactor.

The protein localises to the cytoplasm. Its function is as follows. Single strand-specific metallo-endoribonuclease involved in late-stage 70S ribosome quality control and in maturation of the 3' terminus of the 16S rRNA. The chain is Endoribonuclease YbeY from Desulfitobacterium hafniense (strain Y51).